Consider the following 397-residue polypeptide: UPF0597 protein Tmel_1007 (397 aa).

Belongs to the UPF0597 family.

The sequence is that of UPF0597 protein Tmel_1007 from Thermosipho melanesiensis (strain DSM 12029 / CIP 104789 / BI429).